A 213-amino-acid polypeptide reads, in one-letter code: MNIILFGPPGAGKGTQAQSIVKKHNYFQLSTGNLLRDEVKSKTDLGVDIEKLISNGKFVSDEIVNTLLRQSLTNLKYRDRIIFDGYPRNVEQAINLEVLLNEFNQTIGHTIFLNVSRDIIEKRIMGRMTCEKCNMTLNEYFNKEQIELHPCGVEHLKKRKDDNLEIVISRYDTYMSSTKPVLEFYSKNSNFTEIDGAGEIDQITNKINEILKV.

Residue 10-15 participates in ATP binding; it reads GAGKGT. The segment at 30–59 is NMP; it reads STGNLLRDEVKSKTDLGVDIEKLISNGKFV. AMP contacts are provided by residues threonine 31, arginine 36, 57 to 59, 85 to 88, and glutamine 92; these read KFV and GYPR. The tract at residues 126–162 is LID; sequence GRMTCEKCNMTLNEYFNKEQIELHPCGVEHLKKRKDD. ATP is bound at residue arginine 127. Positions 159 and 170 each coordinate AMP. An ATP-binding site is contributed by glycine 198.

Belongs to the adenylate kinase family. Monomer.

The protein resides in the cytoplasm. It carries out the reaction AMP + ATP = 2 ADP. It participates in purine metabolism; AMP biosynthesis via salvage pathway; AMP from ADP: step 1/1. Catalyzes the reversible transfer of the terminal phosphate group between ATP and AMP. Plays an important role in cellular energy homeostasis and in adenine nucleotide metabolism. This chain is Adenylate kinase, found in Pelagibacter ubique (strain HTCC1062).